The chain runs to 600 residues: Glutamine--fructose-6-phosphate aminotransferase [isomerizing] (600 aa).

Catalysis depends on Cys2, which acts as the Nucleophile; for GATase activity. Residues 2-217 (CGIVGYIGQN…DKEIVLVSRN (216 aa)) enclose the Glutamine amidotransferase type-2 domain. 2 consecutive SIS domains span residues 283 to 422 (IRTA…VKGL) and 452 to 590 (LARD…VDKP). Lys595 acts as the For Fru-6P isomerization activity in catalysis.

Homodimer.

The protein localises to the cytoplasm. It catalyses the reaction D-fructose 6-phosphate + L-glutamine = D-glucosamine 6-phosphate + L-glutamate. In terms of biological role, catalyzes the first step in hexosamine metabolism, converting fructose-6P into glucosamine-6P using glutamine as a nitrogen source. The chain is Glutamine--fructose-6-phosphate aminotransferase [isomerizing] from Oceanobacillus iheyensis (strain DSM 14371 / CIP 107618 / JCM 11309 / KCTC 3954 / HTE831).